The following is a 152-amino-acid chain: Succinate dehydrogenase [ubiquinone] cytochrome b small subunit B, mitochondrial (152 aa).

The N-terminal 21 residues, 1–21, are a transit peptide targeting the mitochondrion; that stretch reads MATLLRVSSLCRANRASAFKS. The Mitochondrial matrix segment spans residues 22 to 56; it reads LLIRPLPCLSQDLHMVQTSQIHTSPNHHAGSKAAS. Residues 57–78 traverse the membrane as a helical segment; that stretch reads MHWTGERALSVALLGLLPAAYL. The Mitochondrial intermembrane portion of the chain corresponds to 79-83; the sequence is YPGAA. The helical transmembrane segment at 84–104 threads the bilayer; it reads MDYSLAAALTLHGHWGLGQVV. A heme b-binding site is contributed by H95. The Mitochondrial matrix segment spans residues 105 to 113; that stretch reads TDYVHGETK. Y107 lines the a ubiquinone pocket. The helical transmembrane segment at 114–135 threads the bilayer; that stretch reads IKMANTSLFALSALTFAGLCYF. Residues 136–152 lie on the Mitochondrial intermembrane side of the membrane; it reads NYHDVGICKAVAMLWSL.

The protein belongs to the CybS family. As to quaternary structure, component of complex II composed of four subunits: the flavoprotein (FP) SDHA, iron-sulfur protein (IP) SDHB, and a cytochrome b560 composed of SDHC and SDHD.

The protein resides in the mitochondrion inner membrane. Its pathway is carbohydrate metabolism; tricarboxylic acid cycle. Its function is as follows. Membrane-anchoring subunit of succinate dehydrogenase (SDH) that is involved in complex II of the mitochondrial electron transport chain and is responsible for transferring electrons from succinate to ubiquinone (coenzyme Q). SDH also oxidizes malate to the non-canonical enol form of oxaloacetate, enol-oxaloacetate. Enol-oxaloacetate, which is a potent inhibitor of the succinate dehydrogenase activity, is further isomerized into keto-oxaloacetate. This is Succinate dehydrogenase [ubiquinone] cytochrome b small subunit B, mitochondrial (sdhd-b) from Xenopus laevis (African clawed frog).